Here is a 677-residue protein sequence, read N- to C-terminus: Methionine--tRNA ligase (677 aa).

The 'HIGH' region signature appears at 15–25 (PYANGSIHLGH). Cys146, Cys149, Cys159, and Cys162 together coordinate Zn(2+). A 'KMSKS' region motif is present at residues 333 to 337 (KMSKS). ATP is bound at residue Lys336. In terms of domain architecture, tRNA-binding spans 575–677 (DFAKVDLRVA…EGAKPGQQVK (103 aa)).

The protein belongs to the class-I aminoacyl-tRNA synthetase family. MetG type 1 subfamily. In terms of assembly, homodimer. Zn(2+) is required as a cofactor.

The protein resides in the cytoplasm. The catalysed reaction is tRNA(Met) + L-methionine + ATP = L-methionyl-tRNA(Met) + AMP + diphosphate. Functionally, is required not only for elongation of protein synthesis but also for the initiation of all mRNA translation through initiator tRNA(fMet) aminoacylation. The sequence is that of Methionine--tRNA ligase from Enterobacter sp. (strain 638).